We begin with the raw amino-acid sequence, 1083 residues long: Chitin synthase 2 (1083 aa).

2 stretches are compositionally biased toward basic and acidic residues: residues 1–10 and 18–30; these read MSSEREERTF and DDVRENISNENQE. 2 disordered regions span residues 1 to 248 and 260 to 294; these read MSSE…IADD and DDDVFAPESDLSDARPHPVDRSSYMSSESQDTLNE. N23 carries an N-linked (GlcNAc...) asparagine glycan. Composition is skewed to polar residues over residues 38–49 and 61–70; these read SYASSMAESQTL and AKLQNKNRTS. An N-linked (GlcNAc...) asparagine glycan is attached at N67. Basic and acidic residues-rich tracts occupy residues 78–100 and 117–128; these read LPRDLPEIPDGISDRRRVHKEQQ and RLRDVNSHDKLP. Polar residues-rich tracts occupy residues 132-148, 177-191, and 282-292; these read SPRNLNYQPSVRSSRSG, RPWTPSSRVSGFTRS, and SYMSSESQDTL. N417 carries N-linked (GlcNAc...) asparagine glycosylation. 8 consecutive transmembrane segments (helical) span residues 708–728, 747–767, 785–805, 820–840, 860–880, 889–909, 987–1007, and 1020–1040; these read WLNGAFFAAVYSLVHFKQIWF, FIQLMFTFFSLANFYLTFYFV, TVIFHILRYACVLLISTQFIL, ISMIIYSIIMVYTTFATFYII, NMIVSILSTIGMYFIMSILYL, SAQYFILLPSYICTLQVYAFC, YLVLTWMIGNGILGMAVSEIY, and FLLWSVAALAVFRAIGSTTFA.

The protein belongs to the chitin synthase family. Class II subfamily.

It localises to the cell membrane. The catalysed reaction is [(1-&gt;4)-N-acetyl-beta-D-glucosaminyl](n) + UDP-N-acetyl-alpha-D-glucosamine = [(1-&gt;4)-N-acetyl-beta-D-glucosaminyl](n+1) + UDP + H(+). Polymerizes chitin, a structural polymer of the cell wall and septum, by transferring the sugar moiety of UDP-GlcNAc to the non-reducing end of the growing chitin polymer. Plays a critical role in cell wall integrity and virulence. The protein is Chitin synthase 2 of Fusarium oxysporum f. sp. lycopersici (strain 4287 / CBS 123668 / FGSC 9935 / NRRL 34936) (Fusarium vascular wilt of tomato).